Reading from the N-terminus, the 490-residue chain is AP-5 complex subunit mu-1 (490 aa).

Positions 206–476 constitute an MHD domain; sequence KPQVSISITE…LISSDYYIWN (271 aa).

It belongs to the adaptor complexes medium subunit family. In terms of assembly, probably part of the adaptor protein complex 5 (AP-5) a tetramer composed of AP5B1, AP5M1, AP5S1 and AP5Z1.

It is found in the cytoplasm. The protein resides in the cytosol. The protein localises to the late endosome membrane. Its subcellular location is the lysosome membrane. As part of AP-5, a probable fifth adaptor protein complex it may be involved in endosomal transport. This Bos taurus (Bovine) protein is AP-5 complex subunit mu-1 (AP5M1).